The chain runs to 360 residues: Phospho-N-acetylmuramoyl-pentapeptide-transferase (360 aa).

Helical transmembrane passes span 26-46, 72-92, 94-114, 132-152, 168-188, 199-219, 236-256, 263-283, 288-308, and 338-358; these read AIVSLLTALFISLWMGPRLIA, PTMGGIMILTSIVVSVLLWAY, SNPYVWCVLFVLVGYGAVGFV, WKYFWMSLIALTVAFALYITG, VMPQLGIFYVLLAYFVIVGTG, GLAIMPTVLVAGGFALVAWAT, AGELVIVCTAIVGAGLGFLWF, VFMGDVGSLALGGALGIIAVL, FLLVIMGGVFVVETLSVILQV, and VIVRFWVISLMLVLIGLATLK.

Belongs to the glycosyltransferase 4 family. MraY subfamily. It depends on Mg(2+) as a cofactor.

Its subcellular location is the cell inner membrane. It carries out the reaction UDP-N-acetyl-alpha-D-muramoyl-L-alanyl-gamma-D-glutamyl-meso-2,6-diaminopimeloyl-D-alanyl-D-alanine + di-trans,octa-cis-undecaprenyl phosphate = di-trans,octa-cis-undecaprenyl diphospho-N-acetyl-alpha-D-muramoyl-L-alanyl-D-glutamyl-meso-2,6-diaminopimeloyl-D-alanyl-D-alanine + UMP. It functions in the pathway cell wall biogenesis; peptidoglycan biosynthesis. Functionally, catalyzes the initial step of the lipid cycle reactions in the biosynthesis of the cell wall peptidoglycan: transfers peptidoglycan precursor phospho-MurNAc-pentapeptide from UDP-MurNAc-pentapeptide onto the lipid carrier undecaprenyl phosphate, yielding undecaprenyl-pyrophosphoryl-MurNAc-pentapeptide, known as lipid I. This chain is Phospho-N-acetylmuramoyl-pentapeptide-transferase, found in Cronobacter sakazakii (strain ATCC BAA-894) (Enterobacter sakazakii).